The primary structure comprises 147 residues: MHLTADQVAALKASWPEVSAGDGGAQLGLEMFTKYFHENPQMMFIFGYSGRTEALKHSSKLQHHGKVIIDQIGKAVAEMDNAKQMAGTLHALGVRHKGFGDIRAEFFPALGMCLLDAMEEKVPGLNRTLWAAAYREISDACIAGLQS.

The Globin domain maps to 2–146; sequence HLTADQVAAL…ISDACIAGLQ (145 aa). Heme b is bound at residue His-96.

This sequence belongs to the globin family. Polymer.

The chain is Globin, major polymeric component P1 from Glycera dibranchiata (Bloodworm).